A 172-amino-acid chain; its full sequence is Small ribosomal subunit protein uS4 (172 aa).

One can recognise an S4 RNA-binding domain in the interval arginine 104 to glycine 168.

Belongs to the universal ribosomal protein uS4 family. Part of the 30S ribosomal subunit. Contacts protein S5. The interaction surface between S4 and S5 is involved in control of translational fidelity.

One of the primary rRNA binding proteins, it binds directly to 16S rRNA where it nucleates assembly of the body of the 30S subunit. In terms of biological role, with S5 and S12 plays an important role in translational accuracy. This Thermofilum pendens (strain DSM 2475 / Hrk 5) protein is Small ribosomal subunit protein uS4.